Consider the following 141-residue polypeptide: Small ribosomal subunit protein bS6 (141 aa).

Residues 97 to 141 form a disordered region; the sequence is TGQSEMLKAEENRSERRERRDRPEHADSADGDDSDNSDASDNADE. Basic and acidic residues predominate over residues 103 to 124; that stretch reads LKAEENRSERRERRDRPEHADS. A compositionally biased stretch (acidic residues) spans 125-141; sequence ADGDDSDNSDASDNADE.

Belongs to the bacterial ribosomal protein bS6 family.

Functionally, binds together with bS18 to 16S ribosomal RNA. The polypeptide is Small ribosomal subunit protein bS6 (Pseudomonas fluorescens (strain ATCC BAA-477 / NRRL B-23932 / Pf-5)).